We begin with the raw amino-acid sequence, 180 residues long: NADH-quinone oxidoreductase subunit I (180 aa).

4Fe-4S ferredoxin-type domains follow at residues 48 to 80 (IVLT…LQKS) and 90 to 119 (EFFR…LTPD). [4Fe-4S] cluster is bound by residues C60, C63, C66, C70, C99, C102, C105, and C109. A compositionally biased stretch (basic and acidic residues) spans 161 to 174 (KPKGDAENEAKPID). A disordered region spans residues 161–180 (KPKGDAENEAKPIDVKSLLP).

Belongs to the complex I 23 kDa subunit family. As to quaternary structure, NDH-1 is composed of 13 different subunits. Subunits NuoA, H, J, K, L, M, N constitute the membrane sector of the complex. It depends on [4Fe-4S] cluster as a cofactor.

The protein localises to the cell inner membrane. It carries out the reaction a quinone + NADH + 5 H(+)(in) = a quinol + NAD(+) + 4 H(+)(out). NDH-1 shuttles electrons from NADH, via FMN and iron-sulfur (Fe-S) centers, to quinones in the respiratory chain. The immediate electron acceptor for the enzyme in this species is believed to be ubiquinone. Couples the redox reaction to proton translocation (for every two electrons transferred, four hydrogen ions are translocated across the cytoplasmic membrane), and thus conserves the redox energy in a proton gradient. The chain is NADH-quinone oxidoreductase subunit I from Shewanella oneidensis (strain ATCC 700550 / JCM 31522 / CIP 106686 / LMG 19005 / NCIMB 14063 / MR-1).